Here is a 716-residue protein sequence, read N- to C-terminus: Amino-acid acetyltransferase, mitochondrial (716 aa).

The transit peptide at 1–44 (MSPHTGWPRTVNSSLLKKHRSSLCTCQHTSSFLPRSFSTTADRH) directs the protein to the mitochondrion. 2 disordered regions span residues 99–119 (YPKSPDENKPEPEKLATAPTL) and 487–508 (LSSSLPMSRRGPTNNGQGTVYP). Over residues 102-112 (SPDENKPEPEK) the composition is skewed to basic and acidic residues. A compositionally biased stretch (polar residues) spans 497–508 (GPTNNGQGTVYP). The N-acetyltransferase domain maps to 537–706 (SRPRLKLDDP…YEAVCRSTQP (170 aa)).

Belongs to the acetyltransferase family.

It is found in the mitochondrion. It catalyses the reaction L-glutamate + acetyl-CoA = N-acetyl-L-glutamate + CoA + H(+). The protein operates within amino-acid biosynthesis; L-arginine biosynthesis; N(2)-acetyl-L-ornithine from L-glutamate: step 1/4. N-acetylglutamate synthase involved in arginine biosynthesis. The protein is Amino-acid acetyltransferase, mitochondrial (arg2) of Neosartorya fischeri (strain ATCC 1020 / DSM 3700 / CBS 544.65 / FGSC A1164 / JCM 1740 / NRRL 181 / WB 181) (Aspergillus fischerianus).